Reading from the N-terminus, the 513-residue chain is Protein STB3 (513 aa).

3 disordered regions span residues Met-1–Ala-20, Lys-134–Met-159, and Tyr-227–Phe-249. Basic and acidic residues predominate over residues Lys-134 to Arg-143. The span at Lys-230–Gly-244 shows a compositional bias: low complexity. Phosphoserine is present on Ser-254. Disordered stretches follow at residues Arg-282 to Ser-354, Asn-373 to Glu-437, and Ala-450 to Ser-513. Polar residues predominate over residues Lys-296 to Leu-306. Residues Ser-307 to Asn-324 are compositionally biased toward low complexity. Composition is skewed to polar residues over residues Asn-373 to Ile-396, Gln-409 to Gln-418, Ala-450 to Val-463, and Asn-470 to Gly-479. Residues Asp-488–Glu-500 show a composition bias toward basic and acidic residues.

This sequence belongs to the STB3 family. In terms of assembly, interacts with SIN3.

The protein resides in the cytoplasm. The polypeptide is Protein STB3 (STB3) (Saccharomyces cerevisiae (strain ATCC 204508 / S288c) (Baker's yeast)).